Consider the following 81-residue polypeptide: RNA-binding protein Hfq (81 aa).

One can recognise a Sm domain in the interval 10–69 (DPFLNTLRKEHIPVSIYLVNGIKLQGHIDSFDQYVVLLKNTVTQMVYKHAISTVVPARAV).

The protein belongs to the Hfq family. In terms of assembly, homohexamer.

Functionally, RNA chaperone that binds small regulatory RNA (sRNAs) and mRNAs to facilitate mRNA translational regulation in response to envelope stress, environmental stress and changes in metabolite concentrations. Also binds with high specificity to tRNAs. This chain is RNA-binding protein Hfq, found in Nitrosospira multiformis (strain ATCC 25196 / NCIMB 11849 / C 71).